Here is a 130-residue protein sequence, read N- to C-terminus: Small ribosomal subunit protein eS8 (130 aa).

The protein belongs to the eukaryotic ribosomal protein eS8 family. In terms of assembly, part of the 30S ribosomal subunit.

The polypeptide is Small ribosomal subunit protein eS8 (Thermococcus gammatolerans (strain DSM 15229 / JCM 11827 / EJ3)).